We begin with the raw amino-acid sequence, 228 residues long: Orotidine 5'-phosphate decarboxylase (228 aa).

Residues Asp8, Lys30, 59–68, Thr118, Arg178, Gln187, Gly207, and Arg208 contribute to the substrate site; that span reads DLKLHDIPNT. Catalysis depends on Lys61, which acts as the Proton donor.

The protein belongs to the OMP decarboxylase family. Type 1 subfamily. As to quaternary structure, homodimer.

It carries out the reaction orotidine 5'-phosphate + H(+) = UMP + CO2. It participates in pyrimidine metabolism; UMP biosynthesis via de novo pathway; UMP from orotate: step 2/2. Catalyzes the decarboxylation of orotidine 5'-monophosphate (OMP) to uridine 5'-monophosphate (UMP). The chain is Orotidine 5'-phosphate decarboxylase from Wolinella succinogenes (strain ATCC 29543 / DSM 1740 / CCUG 13145 / JCM 31913 / LMG 7466 / NCTC 11488 / FDC 602W) (Vibrio succinogenes).